The sequence spans 79 residues: Cell division protein ZapB (79 aa).

Residues 3–79 (LEVFEKLEAK…QALLGRMEEV (77 aa)) adopt a coiled-coil conformation. The segment covering 36–45 (SLTQEVQSAQ) has biased composition (polar residues). The tract at residues 36 to 63 (SLTQEVQSAQHQREELERENNSLKEQQS) is disordered. Positions 46–57 (HQREELERENNS) are enriched in basic and acidic residues.

This sequence belongs to the ZapB family. In terms of assembly, homodimer. The ends of the coiled-coil dimer bind to each other, forming polymers. Interacts with FtsZ.

It localises to the cytoplasm. Non-essential, abundant cell division factor that is required for proper Z-ring formation. It is recruited early to the divisome by direct interaction with FtsZ, stimulating Z-ring assembly and thereby promoting cell division earlier in the cell cycle. Its recruitment to the Z-ring requires functional FtsA or ZipA. This Salmonella agona (strain SL483) protein is Cell division protein ZapB.